A 210-amino-acid chain; its full sequence is Redox-sensing transcriptional repressor Rex (210 aa).

A DNA-binding region (H-T-H motif) is located at residues 15-54 (LYYRIFKRFNTDGIEKASSKQIADALGIDSATVRRDFSYF). An NAD(+)-binding site is contributed by 89 to 94 (GCGNIG).

This sequence belongs to the transcriptional regulatory Rex family. In terms of assembly, homodimer.

The protein resides in the cytoplasm. Functionally, modulates transcription in response to changes in cellular NADH/NAD(+) redox state. This Streptococcus agalactiae serotype Ia (strain ATCC 27591 / A909 / CDC SS700) protein is Redox-sensing transcriptional repressor Rex.